We begin with the raw amino-acid sequence, 365 residues long: Probable 7-methylxanthine methyltransferase 3 (365 aa).

Tyrosine 18 serves as a coordination point for S-adenosyl-L-homocysteine. Threonine 25 provides a ligand contact to theobromine. S-adenosyl-L-homocysteine is bound by residues cysteine 62, glutamine 67, aspartate 99, leucine 100, serine 132, and phenylalanine 133. Residues tyrosine 150, histidine 153, and tryptophan 154 each contribute to the theobromine site. Residues asparagine 170, phenylalanine 258, and asparagine 259 each contribute to the Mg(2+) site. A theobromine-binding site is contributed by phenylalanine 311.

It belongs to the methyltransferase superfamily. Type-7 methyltransferase family. Mg(2+) serves as cofactor.

It catalyses the reaction 7-methylxanthine + S-adenosyl-L-methionine = theobromine + S-adenosyl-L-homocysteine + H(+). Its pathway is alkaloid biosynthesis. Its function is as follows. Involved in the biosynthesis of theobromine. The sequence is that of Probable 7-methylxanthine methyltransferase 3 from Theobroma cacao (Cacao).